We begin with the raw amino-acid sequence, 233 residues long: Superoxide dismutase [Mn] 3.4, mitochondrial (233 aa).

A mitochondrion-targeting transit peptide spans 1 to 29; it reads MALRTLASKNALSFALGGAARPSAASARG. Residues His-57, His-105, Asp-194, and His-198 each contribute to the Mn(2+) site.

This sequence belongs to the iron/manganese superoxide dismutase family. As to quaternary structure, homotetramer. Requires Mn(2+) as cofactor.

It is found in the mitochondrion matrix. The enzyme catalyses 2 superoxide + 2 H(+) = H2O2 + O2. Its function is as follows. Destroys superoxide anion radicals which are normally produced within the cells and which are toxic to biological systems. This Zea mays (Maize) protein is Superoxide dismutase [Mn] 3.4, mitochondrial (SODA.3).